Reading from the N-terminus, the 450-residue chain is UDP-N-acetylmuramoylalanine--D-glutamate ligase (450 aa).

119-125 (GSNGKTT) provides a ligand contact to ATP.

It belongs to the MurCDEF family.

It localises to the cytoplasm. It carries out the reaction UDP-N-acetyl-alpha-D-muramoyl-L-alanine + D-glutamate + ATP = UDP-N-acetyl-alpha-D-muramoyl-L-alanyl-D-glutamate + ADP + phosphate + H(+). The protein operates within cell wall biogenesis; peptidoglycan biosynthesis. Functionally, cell wall formation. Catalyzes the addition of glutamate to the nucleotide precursor UDP-N-acetylmuramoyl-L-alanine (UMA). This chain is UDP-N-acetylmuramoylalanine--D-glutamate ligase, found in Streptococcus thermophilus (strain ATCC BAA-491 / LMD-9).